The following is a 199-amino-acid chain: Fe/S biogenesis protein NfuA (199 aa).

[4Fe-4S] cluster-binding residues include Cys-151 and Cys-154.

It belongs to the NfuA family. In terms of assembly, homodimer. [4Fe-4S] cluster is required as a cofactor.

Functionally, involved in iron-sulfur cluster biogenesis. Binds a 4Fe-4S cluster, can transfer this cluster to apoproteins, and thereby intervenes in the maturation of Fe/S proteins. Could also act as a scaffold/chaperone for damaged Fe/S proteins. This is Fe/S biogenesis protein NfuA from Xylella fastidiosa (strain M12).